Here is a 607-residue protein sequence, read N- to C-terminus: UvrABC system protein C (607 aa).

The 79-residue stretch at 16–94 (GRPGVYRMFD…IKEWRPPYNI (79 aa)) folds into the GIY-YIG domain. Residues 203–238 (QQLGNELNAEMEKAAMALNFEKAAELRDQIALLRRV) form the UVR domain.

The protein belongs to the UvrC family. As to quaternary structure, interacts with UvrB in an incision complex.

The protein localises to the cytoplasm. Functionally, the UvrABC repair system catalyzes the recognition and processing of DNA lesions. UvrC both incises the 5' and 3' sides of the lesion. The N-terminal half is responsible for the 3' incision and the C-terminal half is responsible for the 5' incision. This chain is UvrABC system protein C, found in Pseudomonas entomophila (strain L48).